Reading from the N-terminus, the 148-residue chain is D-aminoacyl-tRNA deacylase (148 aa).

The Gly-cisPro motif, important for rejection of L-amino acids signature appears at Gly137–Pro138.

Belongs to the DTD family. In terms of assembly, homodimer.

The protein localises to the cytoplasm. It carries out the reaction glycyl-tRNA(Ala) + H2O = tRNA(Ala) + glycine + H(+). The enzyme catalyses a D-aminoacyl-tRNA + H2O = a tRNA + a D-alpha-amino acid + H(+). Its function is as follows. An aminoacyl-tRNA editing enzyme that deacylates mischarged D-aminoacyl-tRNAs. Also deacylates mischarged glycyl-tRNA(Ala), protecting cells against glycine mischarging by AlaRS. Acts via tRNA-based rather than protein-based catalysis; rejects L-amino acids rather than detecting D-amino acids in the active site. By recycling D-aminoacyl-tRNA to D-amino acids and free tRNA molecules, this enzyme counteracts the toxicity associated with the formation of D-aminoacyl-tRNA entities in vivo and helps enforce protein L-homochirality. This chain is D-aminoacyl-tRNA deacylase, found in Lactiplantibacillus plantarum (strain ATCC BAA-793 / NCIMB 8826 / WCFS1) (Lactobacillus plantarum).